A 249-amino-acid chain; its full sequence is Putative [LysW]-aminoadipate/[LysW]-glutamate kinase (249 aa).

R64 and N166 together coordinate substrate.

This sequence belongs to the acetylglutamate kinase family. LysZ subfamily.

The protein localises to the cytoplasm. It catalyses the reaction [amino-group carrier protein]-C-terminal-N-(1,4-dicarboxybutan-1-yl)-L-glutamine + ATP = [amino-group carrier protein]-C-terminal-N-(1-carboxy-5-phosphooxy-5-oxopentan-1-yl)-L-glutamine + ADP. It carries out the reaction [amino-group carrier protein]-C-terminal-gamma-(L-glutamyl)-L-glutamate + ATP = [amino-group carrier protein]-C-terminal-gamma-(5-phospho-L-glutamyl)-L-glutamate + ADP. Its pathway is amino-acid biosynthesis; L-lysine biosynthesis via AAA pathway; L-lysine from L-alpha-aminoadipate (Thermus route): step 2/5. It participates in amino-acid biosynthesis; L-arginine biosynthesis. Functionally, involved in both the arginine and lysine biosynthetic pathways. Phosphorylates the LysW-bound precursors glutamate (for arginine biosynthesis), respectively alpha-aminoadipate (for lysine biosynthesis). In Pyrococcus horikoshii (strain ATCC 700860 / DSM 12428 / JCM 9974 / NBRC 100139 / OT-3), this protein is Putative [LysW]-aminoadipate/[LysW]-glutamate kinase.